Here is a 320-residue protein sequence, read N- to C-terminus: tRNA-cytidine(32) 2-sulfurtransferase (320 aa).

The PP-loop motif signature appears at Ser54–Ser59. Cys129, Cys132, and Cys220 together coordinate [4Fe-4S] cluster.

Belongs to the TtcA family. Homodimer. Mg(2+) serves as cofactor. Requires [4Fe-4S] cluster as cofactor.

It localises to the cytoplasm. The enzyme catalyses cytidine(32) in tRNA + S-sulfanyl-L-cysteinyl-[cysteine desulfurase] + AH2 + ATP = 2-thiocytidine(32) in tRNA + L-cysteinyl-[cysteine desulfurase] + A + AMP + diphosphate + H(+). Its pathway is tRNA modification. Functionally, catalyzes the ATP-dependent 2-thiolation of cytidine in position 32 of tRNA, to form 2-thiocytidine (s(2)C32). The sulfur atoms are provided by the cysteine/cysteine desulfurase (IscS) system. This chain is tRNA-cytidine(32) 2-sulfurtransferase, found in Bordetella pertussis (strain Tohama I / ATCC BAA-589 / NCTC 13251).